The primary structure comprises 176 residues: NAD(P)H-quinone oxidoreductase subunit J (176 aa).

The protein belongs to the complex I 30 kDa subunit family. As to quaternary structure, NDH-1 can be composed of about 15 different subunits; different subcomplexes with different compositions have been identified which probably have different functions.

The protein resides in the cellular thylakoid membrane. It catalyses the reaction a plastoquinone + NADH + (n+1) H(+)(in) = a plastoquinol + NAD(+) + n H(+)(out). It carries out the reaction a plastoquinone + NADPH + (n+1) H(+)(in) = a plastoquinol + NADP(+) + n H(+)(out). Functionally, NDH-1 shuttles electrons from an unknown electron donor, via FMN and iron-sulfur (Fe-S) centers, to quinones in the respiratory and/or the photosynthetic chain. The immediate electron acceptor for the enzyme in this species is believed to be plastoquinone. Couples the redox reaction to proton translocation, and thus conserves the redox energy in a proton gradient. Cyanobacterial NDH-1 also plays a role in inorganic carbon-concentration. In Prochlorococcus marinus subsp. pastoris (strain CCMP1986 / NIES-2087 / MED4), this protein is NAD(P)H-quinone oxidoreductase subunit J.